We begin with the raw amino-acid sequence, 550 residues long: Chaperonin GroEL (550 aa).

ATP contacts are provided by residues T29–P32, K50, D86–T90, G414, and D495.

It belongs to the chaperonin (HSP60) family. Forms a cylinder of 14 subunits composed of two heptameric rings stacked back-to-back. Interacts with the co-chaperonin GroES.

The protein localises to the cytoplasm. The catalysed reaction is ATP + H2O + a folded polypeptide = ADP + phosphate + an unfolded polypeptide.. Together with its co-chaperonin GroES, plays an essential role in assisting protein folding. The GroEL-GroES system forms a nano-cage that allows encapsulation of the non-native substrate proteins and provides a physical environment optimized to promote and accelerate protein folding. The sequence is that of Chaperonin GroEL from Parvibaculum lavamentivorans (strain DS-1 / DSM 13023 / NCIMB 13966).